A 133-amino-acid chain; its full sequence is UPF0768 protein C977.18 (133 aa).

Belongs to the UPF0768 family.

The protein is UPF0768 protein C977.18 of Schizosaccharomyces pombe (strain 972 / ATCC 24843) (Fission yeast).